A 430-amino-acid polypeptide reads, in one-letter code: T-kininogen 2 (430 aa).

An N-terminal signal peptide occupies residues 1 to 18; sequence MKLITILLLCSRLLPSLA. Glutamine 19 bears the Pyrrolidone carboxylic acid mark. Residues 28 to 131 enclose the Cystatin kininogen-type 1 domain; the sequence is CNDETVFQAV…TQICNITPGK (104 aa). 9 cysteine pairs are disulfide-bonded: cysteine 28–cysteine 404, cysteine 83–cysteine 94, cysteine 107–cysteine 125, cysteine 141–cysteine 144, cysteine 205–cysteine 217, cysteine 228–cysteine 247, cysteine 263–cysteine 266, cysteine 327–cysteine 339, and cysteine 350–cysteine 369. Asparagine 82 is a glycosylation site (N-linked (GlcNAc...) asparagine). The region spanning 150–253 is the Cystatin kininogen-type 2 domain; that stretch reads MDSSDLKPVL…SQSCDLYPGD (104 aa). Asparagine 168 and asparagine 204 each carry an N-linked (GlcNAc...) asparagine glycan. The Cystatin kininogen-type 3 domain maps to 272–375; it reads VDSPELKEAL…TVRCQALDMM (104 aa). Residue asparagine 326 is glycosylated (N-linked (GlcNAc...) asparagine). Residues 410–430 form a disordered region; the sequence is LSKAGAGPAPDHQAEASTVTP.

As T-kinin is preceded by a Met instead of an Arg or Lys, it is not released from its precursor by either tissue or plasma kallikrein. As to expression, plasma.

It localises to the secreted. Its subcellular location is the extracellular space. Functionally, kininogens are plasma glycoproteins with a number of functions: (1) as precursor of the active peptide bradykinin they effect smooth muscle contraction, induction of hypotension and increase of vascular permeability. (2) They play a role in blood coagulation by helping to position optimally prekallikrein and factor XI next to factor XII. (3) They are inhibitor of thiol proteases. The polypeptide is T-kininogen 2 (Rattus norvegicus (Rat)).